We begin with the raw amino-acid sequence, 474 residues long: PRAME family member 1 (474 aa).

The stretch at 97–124 (RWKLQVLDLRDVDENFWARWPGAWALSC) is one LRR 1; degenerate repeat. Residues 179–203 (HLCCSKLVNYLTPIKYLRKSLKIIY) form an LRR 2; degenerate repeat. One copy of the LRR 3; degenerate repeat lies at 204-230 (LNSIQELEIRNMSWPRLIRKLRCYLKE). Residues 231-265 (MKNLRKLVFSRCHHYTSDNELEGRLVAKFSSVFLR) form an LRR 4; degenerate repeat. LRR repeat units follow at residues 266–291 (LEHLQLLKIKLITFFSGHLEQLIRCL), 292–323 (QNPLENLELTYGYLLEEDMKCLSQYPSLGYLK), 324–342 (HLNLSYVLLFRISLEPLGA), 348–375 (AASLKTLILEGCQIHYSQLSAILPGLSR), and 376–400 (CSQLTTFYFGRNCMSIDALKDLLRH).

It belongs to the PRAME family.

In Homo sapiens (Human), this protein is PRAME family member 1.